Here is a 75-residue protein sequence, read N- to C-terminus: Large ribosomal subunit protein bL28 (75 aa).

Residues 1–21 (MARVCQVTGKRPMSGNKRSHA) form a disordered region.

It belongs to the bacterial ribosomal protein bL28 family.

The chain is Large ribosomal subunit protein bL28 from Blochmanniella pennsylvanica (strain BPEN).